Here is a 199-residue protein sequence, read N- to C-terminus: MEKLGEDFFTKPTLMLAELLLGKIFVHNTGDGRCYRGKIVETEAYLAEGDEACHAYRGMTKRNRPMYGSPGTLYVYFSYGCHHLMNIVTEPAGVAGAVLIRAMEPIEGLEDMKRNRGLERTVDLLNGPGKLTRAMEITLSHNGASLSGDTVFIEKREDTAPHKICSSKRIGITKSTGLLWRRYVSDSFFVSGKKAGKAC.

This sequence belongs to the DNA glycosylase MPG family.

The chain is Putative 3-methyladenine DNA glycosylase from Chlorobium phaeobacteroides (strain BS1).